The primary structure comprises 635 residues: Signal recognition particle subunit SRP72 (635 aa).

TPR repeat units lie at residues 7–42 (GGLY…YPKE), 75–105 (GHVG…DKDD), 106–139 (VKAL…HSDD), 171–204 (YSQL…CRKS), 220–253 (DSIR…NHPD), 255–290 (SVKA…DQTK), and 436–469 (VEVE…QCRL). Residues 539-635 (KRKRKIRLPK…QKKKKNASKF (97 aa)) are disordered. Over residues 557 to 569 (DPERWLPRQERST) the composition is skewed to basic and acidic residues. Over residues 625 to 635 (KQKKKKNASKF) the composition is skewed to basic residues.

The protein belongs to the SRP72 family. In terms of assembly, heterodimer with srpa-68. Srpa-68-srpa-72 heterodimer formation is stabilized by the presence of 7SL RNA. Component of a signal recognition particle (SRP) complex that consists of a 7SL RNA molecule of 300 nucleotides and six protein subunits: srpa-72, srpa-68, SRP54, F37F2.2/SRP19, F25G6.8/SRP14 and ZK512.4/SRP9. Within the SRP complex, interacts (via N-terminus) with srpa-68 (via C-terminus).

Its subcellular location is the cytoplasm. The protein resides in the endoplasmic reticulum. Functionally, component of the signal recognition particle (SRP) complex, a ribonucleoprotein complex that mediates the cotranslational targeting of secretory and membrane proteins to the endoplasmic reticulum (ER). The SRP complex interacts with the signal sequence in nascent secretory and membrane proteins and directs them to the membrane of the ER. The SRP complex targets the ribosome-nascent chain complex to the SRP receptor (SR), which is anchored in the ER, where SR compaction and GTPase rearrangement drive cotranslational protein translocation into the ER. Binds the signal recognition particle RNA (7SL RNA) in presence of srpa-68. Can bind 7SL RNA with low affinity. The SRP complex possibly participates in the elongation arrest function. In Caenorhabditis elegans, this protein is Signal recognition particle subunit SRP72.